A 146-amino-acid chain; its full sequence is Bacterial hemoglobin (146 aa).

The Globin domain maps to 1 to 138; the sequence is MLDQQTINII…IADVFIQVEA (138 aa). Residues Q53 and H85 each contribute to the heme b site.

The protein belongs to the globin family. In terms of assembly, homodimer.

Functionally, this protein functions as a terminal oxidase. The protein is Bacterial hemoglobin (vhb) of Vitreoscilla stercoraria.